Reading from the N-terminus, the 231-residue chain is mRNA-decapping enzyme subunit 1 (231 aa).

Residues 92–120 (QNGSNNIQVNNGSDNSNRNSSGNGNSYKS) form a disordered region. A compositionally biased stretch (low complexity) spans 101 to 120 (NNGSDNSNRNSSGNGNSYKS).

The protein belongs to the DCP1 family. As to quaternary structure, component of the decapping complex composed of DCP1 and DCP2. Interacts with mRNAs, DHH1, LSM1, LSM2, LSM3, LSM4, LSM5, LSM6, LSM7, and the cap-binding proteins PAB1 and TIF4632/eIF-4G. Phosphorylated.

The protein localises to the cytoplasm. It is found in the P-body. Component of the decapping complex necessary for the degradation of mRNAs, both in normal mRNA turnover and in nonsense-mediated mRNA decay. Removes the 7-methyl guanine cap structure from mRNA molecules, yielding a 5'-phosphorylated mRNA fragment and 7m-GDP. Decapping is the major pathway of mRNA degradation in yeast. It occurs through deadenylation, decapping and subsequent 5' to 3' exonucleolytic decay of the transcript body. DCP1 is activated by the DEAD-box helicase DHH1 and destabilizes the eIF-4F cap-binding complex from the mRNA. The polypeptide is mRNA-decapping enzyme subunit 1 (DCP1) (Saccharomyces cerevisiae (strain ATCC 204508 / S288c) (Baker's yeast)).